Reading from the N-terminus, the 420-residue chain is Gamma-glutamyl phosphate reductase (420 aa).

This sequence belongs to the gamma-glutamyl phosphate reductase family.

The protein resides in the cytoplasm. The catalysed reaction is L-glutamate 5-semialdehyde + phosphate + NADP(+) = L-glutamyl 5-phosphate + NADPH + H(+). It functions in the pathway amino-acid biosynthesis; L-proline biosynthesis; L-glutamate 5-semialdehyde from L-glutamate: step 2/2. Its function is as follows. Catalyzes the NADPH-dependent reduction of L-glutamate 5-phosphate into L-glutamate 5-semialdehyde and phosphate. The product spontaneously undergoes cyclization to form 1-pyrroline-5-carboxylate. The protein is Gamma-glutamyl phosphate reductase of Streptococcus pneumoniae (strain CGSP14).